The primary structure comprises 1022 residues: Sodium-dependent transporter snf-12 (1022 aa).

Topologically, residues 1–165 are cytoplasmic; sequence MNGEWKSALR…RRELWRTQKD (165 aa). Residues 166-185 form a helical membrane-spanning segment; it reads FFLSCLGFMVGVGHTMRFPA. The Extracellular segment spans residues 186–192; sequence KVYQHGG. Residues 193–213 traverse the membrane as a helical segment; the sequence is GVFFIPYLFSLIFFGLPLVFL. At 214–241 the chain is on the cytoplasmic side; that stretch reads HLSLGQYTGQAANTAFQRLMPIGSGVGW. The helical transmembrane segment at 242-262 threads the bilayer; the sequence is ALVVIAIPVAVYYNIIVAWAI. Over 263-337 the chain is Extracellular; it reads HYFFQSAKGL…DFALGPLQSH (75 aa). The helical transmembrane segment at 338-358 threads the bilayer; sequence LVLSLAAAWLLVFFGVFKGLG. Position 359 (serine 359) is a topological domain, cytoplasmic. The chain crosses the membrane as a helical span at residues 360-380; that stretch reads IAQTMNVTATVPYLLLSILLL. At 381–412 the chain is on the extracellular side; that stretch reads RGISLPGANKGLTFLFTVDSTKLWKWQIWKSA. The chain crosses the membrane as a helical span at residues 413–433; that stretch reads AEQVFYELGIDAGPLISMAAF. Over 434 to 444 the chain is Cytoplasmic; the sequence is SRYRNNIYRDS. Residues 445–465 form a helical membrane-spanning segment; sequence VLLVIMDALTSCLSGMVIFSF. At 466-498 the chain is on the extracellular side; it reads VGFIASESNSNVNDVLKHDPLYLSFTVYPGVTS. Residues 499–519 traverse the membrane as a helical segment; it reads FMYWGGLWATLFFGMLVLAAI. Over 520–550 the chain is Cytoplasmic; sequence DAEFAWLEMIASAFMNHFSMKNKAVENRLLA. The chain crosses the membrane as a helical span at residues 551 to 571; that stretch reads FLCLAGFFLGLPLCAQGGIFV. The Extracellular segment spans residues 572–584; sequence FHAIENLNANWNS. The chain crosses the membrane as a helical span at residues 585 to 605; sequence FSLALLSVAIVCYVYGIDNYL. Topologically, residues 606 to 641 are cytoplasmic; that stretch reads TDISAMLRVPRIQISKATRLKEKLIYFFGPGGIYIK. The chain crosses the membrane as a helical span at residues 642 to 662; it reads FSLCFICPVILTVLLVASVLG. Over 663–677 the chain is Extracellular; sequence YQRISFAGRPIPIDY. Residues 678-698 traverse the membrane as a helical segment; that stretch reads EIVAWIVMIGPLLVVPLVAFM. Residues 699–1022 are Cytoplasmic-facing; the sequence is QIRQIRNEGK…RPKPIDMPPK (324 aa). Disordered regions lie at residues 867–948 and 995–1022; these read RIPN…SSDD and IYDQ…MPPK. Residues 893–907 show a composition bias toward pro residues; sequence SDPPVPTSPLPPPPK. The segment covering 933–943 has biased composition (low complexity); that stretch reads DDSPSISNSSD.

This sequence belongs to the sodium:neurotransmitter symporter (SNF) (TC 2.A.22) family. In terms of assembly, may interact with STAT family transcription factor sta-2; the interaction is probably direct.

The protein resides in the membrane. The protein localises to the cytoplasm. Its subcellular location is the vesicle. Functionally, probably mediates sodium-dependent uptake of unknown small molecule(s). By positively modulating expression, in the epidermis, of antimicrobial peptides such as nlp-29, plays a role in resistance to fungal infection and in the response to physical wounding and phorbol ester PMA treatment. Role in response to wounding of the epidermis may be facilitated by recruitment of snf-12 to the wound site by microtubule-dependent vesicle trafficking. Functions cell autonomously in the epidermis, in concert with STAT transcription factor sta-2, probably acting at vesicular membranes, downstream of a p38 MAPK/pmk-1 pathway. The sequence is that of Sodium-dependent transporter snf-12 from Caenorhabditis elegans.